A 784-amino-acid polypeptide reads, in one-letter code: Probable phosphoketolase (784 aa).

This sequence belongs to the XFP family. Thiamine diphosphate is required as a cofactor.

In Rhodopseudomonas palustris (strain HaA2), this protein is Probable phosphoketolase.